Reading from the N-terminus, the 78-residue chain is DNA gyrase inhibitor YacG (78 aa).

Residues C7, C10, C26, and C30 each coordinate Zn(2+).

The protein belongs to the DNA gyrase inhibitor YacG family. Interacts with GyrB. Requires Zn(2+) as cofactor.

Functionally, inhibits all the catalytic activities of DNA gyrase by preventing its interaction with DNA. Acts by binding directly to the C-terminal domain of GyrB, which probably disrupts DNA binding by the gyrase. In Shewanella piezotolerans (strain WP3 / JCM 13877), this protein is DNA gyrase inhibitor YacG.